The chain runs to 83 residues: Host transcription reprogramming factor 9 (83 aa).

Positions 1–19 (MQFSKITLAIVLYALGTAA) are cleaved as a signal peptide. The C2H2-type zinc finger occupies 54-77 (YRCDKCEKEFVKGNDFFNHGGRGH).

It localises to the secreted. Its subcellular location is the host nucleus. Its function is as follows. Probable secreted effector that translocates into the nuclei of host cells to reprogram the expression of targeted genes by binding on effector binding elements in rice. This Pyricularia oryzae (strain 70-15 / ATCC MYA-4617 / FGSC 8958) (Rice blast fungus) protein is Host transcription reprogramming factor 9.